The sequence spans 257 residues: UPF0246 protein A1S_2267 (257 aa).

This sequence belongs to the UPF0246 family.

This is UPF0246 protein A1S_2267 from Acinetobacter baumannii (strain ATCC 17978 / DSM 105126 / CIP 53.77 / LMG 1025 / NCDC KC755 / 5377).